The following is a 961-amino-acid chain: MDEQSVESIAEVFRCFICMEKLRDARLCPHCSKLCCFSCIRRWLTEQRAQCPHCRAPLQLRELVNCRWAEEVTQQLDTLQLCSLTKHEENEKDKCENHHEKLSVFCWTCKKCICHQCALWGGMHGGHTFKPLAEIYEQHVTKVNEEVAKLRRRLMELISLVQEVERNVEAVRNAKDERVREIRNAVEMMIARLDTQLKNKLITLMGQKTSLTQETELLESLLQEVEHQLRSCSKSELISKSSEILMMFQQVHRKPMASFVTTPVPPDFTSELVPSYDSATFVLENFSTLRQRADPVYSPPLQVSGLCWRLKVYPDGNGVVRGYYLSVFLELSAGLPETSKYEYRVEMVHQSCNDPTKNIIREFASDFEVGECWGYNRFFRLDLLANEGYLNRQNDTVILRFQVRSPTFFQKCRDQHWYITQLEAAQTGYIQQINNLKERLTIELSRTQKSRDLSPPDNHLSPQNDDSPETRTKKAGSCSDMLLEGGPTCASVRETKEDEDEEEKIQNEDYHHELSDGDLDLDLVGEDEVNHLDGSSSSASSTATSNTEENDIDEETMSGENDVEYNSMELEEGELMEDAAAAGPPGSSHSYVGASSRMSRRTHLCSAATSSLLDIDPLILIHLLDLKDRSSMENLWGLQPRPSASLLQPTASYSRKDKDQRKQQAMWRVPSDLKMLKRLKTQMAEVRCMKTDVKTTLSDIKGSSVASTDMQTNLFCADQAALTTCGPENSGRLQDLGMELLAKSSVAGCYIRNPTNKKNSPKSARAIAGSLSLRRAVDSGENSRSKGDCQVLAEGSSGSSQSGSRHSSPRALTHGIIGDLLPKSEDRQCKALDSDAVVVAVFNGLPTVEKRRKMVTLGTNAKGGRLEGMQMADLESHSEAGEVQPTLPEGASAAPEEGMSSDSDIECDTENEEQEEHTSMGAFNDPFLAQPPDEDSHSSFPDGEQIDPENLHFNPDEGGGR.

An N-acetylmethionine modification is found at Met1. Residues 15-55 (CFICMEKLRDARLCPHCSKLCCFSCIRRWLTEQRAQCPHCR) form an RING-type; degenerate zinc finger. A B box-type zinc finger spans residues 90–132 (NEKDKCENHHEKLSVFCWTCKKCICHQCALWGGMHGGHTFKPL). Residues Cys95, His98, Cys117, and His124 each coordinate Zn(2+). Residues 132–234 (LAEIYEQHVT…VEHQLRSCSK (103 aa)) adopt a coiled-coil conformation. In terms of domain architecture, MATH spans 276 to 403 (YDSATFVLEN…NDTVILRFQV (128 aa)). Residues 419 to 450 (ITQLEAAQTGYIQQINNLKERLTIELSRTQKS) adopt a coiled-coil conformation. Disordered stretches follow at residues 447-514 (TQKS…HHEL), 529-561 (VNHL…SGEN), 645-665 (SLLQ…KQQA), 776-811 (AVDS…SPRA), and 874-961 (LESH…GGGR). Ser454 is subject to Phosphoserine. The span at 504 to 514 (KIQNEDYHHEL) shows a compositional bias: basic and acidic residues. Residues 535–545 (SSSSASSTATS) show a composition bias toward low complexity. Residues 548-561 (EENDIDEETMSGEN) are compositionally biased toward acidic residues. Basic and acidic residues predominate over residues 776-787 (AVDSGENSRSKG). Over residues 795-806 (GSSGSSQSGSRH) the composition is skewed to low complexity. A compositionally biased stretch (acidic residues) spans 903 to 915 (SDIECDTENEEQE).

It belongs to the TRIM/RBCC family. As to quaternary structure, associates with the PRC2/EED-EZH2 complex. In terms of processing, auto-ubiquitinated. In terms of tissue distribution, highly expressed in testis and brain. In embryonic tissues, expressed in epithelia, including ducts of the developing pancreas, epithelium of the midgut and nasal epithelium. In adult, detected in the central and peripheral nervous systems, including enteric ganglia, retina and the adrenal medulla (at protein level).

The protein resides in the chromosome. The protein localises to the cytoplasm. It localises to the perinuclear region. It is found in the peroxisome membrane. The enzyme catalyses S-ubiquitinyl-[E2 ubiquitin-conjugating enzyme]-L-cysteine + [acceptor protein]-L-lysine = [E2 ubiquitin-conjugating enzyme]-L-cysteine + N(6)-ubiquitinyl-[acceptor protein]-L-lysine.. The protein operates within protein modification; protein ubiquitination. Its function is as follows. E3 ubiquitin-protein ligase required to prevent centriole reduplication. Probably acts by ubiquitinating positive regulators of centriole reduplication. Mediates monoubiquitination of 'Lys-119' of histone H2A (H2AK119Ub), a specific tag for epigenetic transcriptional repression: associates with some Polycomb group (PcG) multiprotein PRC2-like complex and mediates repression of target genes. Also acts as a positive regulator of peroxisome import by mediating monoubiquitination of PEX5 at 'Lys-472': monoubiquitination promotes PEX5 stabilitation by preventing its polyubiquitination and degradation by the proteasome. The protein is E3 ubiquitin-protein ligase TRIM37 of Mus musculus (Mouse).